The sequence spans 480 residues: Phenylalanine--tRNA ligase alpha subunit (480 aa).

Residues Thr-324 and Phe-407 each contribute to the L-phenylalanine site. Glu-409 serves as a coordination point for Mg(2+). Phe-432 is a binding site for L-phenylalanine.

The protein belongs to the class-II aminoacyl-tRNA synthetase family. Phe-tRNA synthetase alpha subunit type 2 subfamily. As to quaternary structure, tetramer of two alpha and two beta subunits. Mg(2+) serves as cofactor.

It is found in the cytoplasm. It carries out the reaction tRNA(Phe) + L-phenylalanine + ATP = L-phenylalanyl-tRNA(Phe) + AMP + diphosphate + H(+). This is Phenylalanine--tRNA ligase alpha subunit from Methanocaldococcus jannaschii (strain ATCC 43067 / DSM 2661 / JAL-1 / JCM 10045 / NBRC 100440) (Methanococcus jannaschii).